Here is a 406-residue protein sequence, read N- to C-terminus: Probable sphingosine-1-phosphate phosphatase (406 aa).

Transmembrane regions (helical) follow at residues 66–86 (ILGE…CVAT) and 92–112 (LCVV…TFTL). A phosphatase sequence motif I region spans residues 107–115 (KNTFTLPRP). A phosphatase sequence motif II region spans residues 133–136 (PSTH). The active-site Proton donor is histidine 136. 2 helical membrane-spanning segments follow: residues 138-158 (ASAF…FPTI) and 162-182 (FNIS…SVMF). The phosphatase sequence motif III stretch occupies residues 183–194 (SRLYNGHHTPMD). Catalysis depends on histidine 190, which acts as the Nucleophile. 5 helical membrane passes run 193–213 (MDVI…TYQL), 225–245 (TFLF…FFHP), 254–274 (AYPE…SLWL), 313–333 (ILIG…FFFF), and 374–394 (LFVY…FYYL).

It belongs to the type 2 lipid phosphate phosphatase family.

It localises to the endoplasmic reticulum membrane. Has enzymatic activity against both sphingosine 1 phosphate (S1P) and dihydro-S1P. Regulates intracellular and extracellular S1P levels. In Dictyostelium discoideum (Social amoeba), this protein is Probable sphingosine-1-phosphate phosphatase (sppA).